We begin with the raw amino-acid sequence, 360 residues long: Dehydrogenase mokE (360 aa).

NADP(+) is bound at residue 50–53 (SDTK). 134–141 (AGISTAGL) lines the substrate pocket. NADP(+) is bound by residues 173–176 (STAT), 196–199 (SPHN), Tyr214, 261–262 (LN), and Thr279. Residue 281–285 (GPTIF) participates in substrate binding. 350–351 (LS) serves as a coordination point for NADP(+).

The protein belongs to the zinc-containing alcohol dehydrogenase family. Monomer.

Its pathway is polyketide biosynthesis; lovastatin biosynthesis. Functionally, dehydrogenase; part of the gene cluster that mediates the biosynthesis of monakolin K, also known as lovastatin, and which acts as a potent competitive inhibitor of HMG-CoA reductase. Monakolin K biosynthesis is performed in two stages. The first stage is catalyzed by the nonaketide synthase mokA, which belongs to type I polyketide synthases and catalyzes the iterative nine-step formation of the polyketide. This PKS stage is completed by the action of dehydrogenase mokE, which catalyzes the NADPH-dependent reduction of the unsaturated tetra-, penta- and heptaketide intermediates that arise during the mokA-mediated biosynthesis of the nonaketide chain and leads to dihydromonacolin L. Covalently bound dihydromonacolin L is released from mokA by the mokD esterase. Conversion of dihydromonacolin L into monacolin L and then monacolin J is subsequently performed with the participation of molecular oxygen and P450 monoogygenase mokC. Finally, mokF performs the conversion of monacoline J to monacoline K through the addition of the side-chain diketide moiety (2R)-2-methylbutanoate produced by the diketide synthase mokB. This is Dehydrogenase mokE from Monascus pilosus (Red mold).